We begin with the raw amino-acid sequence, 965 residues long: PWWP domain-containing protein 4 (965 aa).

The region spanning 135-196 (VGDMVWGKVK…PAELIPFEPH (62 aa)) is the PWWP domain. Polar residues predominate over residues 437 to 455 (MNFTSSSGNIPGKKSSVSK). Disordered stretches follow at residues 437-507 (MNFT…KSSL), 526-577 (VVKR…KSSQ), 649-708 (SAKT…SLAP), and 905-927 (LSSQ…PPLD). 2 stretches are compositionally biased toward basic and acidic residues: residues 456–474 (LSRD…RMGE) and 481–495 (DQEK…KQDE). Residues 496–507 (TGTNSRSNKSSL) are compositionally biased toward polar residues. The Nuclear localization signal signature appears at 546–553 (KKKEYVSE). The segment covering 549–563 (EYVSELNRDTPDKRK) has biased composition (basic and acidic residues). Residues 657 to 676 (NEQSKAGRNRISSDSQQDVP) show a composition bias toward polar residues. The segment covering 691–702 (ASDKKTNQDATK) has biased composition (basic and acidic residues). The segment covering 905-919 (LSSQDSEPKPVNNQV) has biased composition (polar residues).

This sequence belongs to the PDP family. As to quaternary structure, component of the PRC2 (polycomb repressive complex 2) complex which regulates histone methylation on histone H3K27.

Its subcellular location is the nucleus. Its function is as follows. May influence gene expression by regulating the function of the PRC2 complex and modulating H3K27me3 level. The chain is PWWP domain-containing protein 4 from Arabidopsis thaliana (Mouse-ear cress).